We begin with the raw amino-acid sequence, 71 residues long: Exodeoxyribonuclease 7 small subunit (71 aa).

Belongs to the XseB family. As to quaternary structure, heterooligomer composed of large and small subunits.

It is found in the cytoplasm. The catalysed reaction is Exonucleolytic cleavage in either 5'- to 3'- or 3'- to 5'-direction to yield nucleoside 5'-phosphates.. In terms of biological role, bidirectionally degrades single-stranded DNA into large acid-insoluble oligonucleotides, which are then degraded further into small acid-soluble oligonucleotides. The polypeptide is Exodeoxyribonuclease 7 small subunit (Clostridium botulinum (strain Loch Maree / Type A3)).